The following is a 57-amino-acid chain: UPF0391 membrane protein RPD_3366 (57 aa).

Helical transmembrane passes span 4 to 24 (WVVT…GGIA) and 30 to 50 (IAKV…VVGL).

Belongs to the UPF0391 family.

It is found in the cell membrane. This Rhodopseudomonas palustris (strain BisB5) protein is UPF0391 membrane protein RPD_3366.